The sequence spans 364 residues: PHD finger protein 6 (364 aa).

Position 2 is an N-acetylserine (S2). Short sequence motifs (nuclear localization signal) lie at residues 13 to 16 and 129 to 133; these read RQRK and RKHKK. The C2HC pre-PHD-type 1 zinc-finger motif lies at 14–52; that stretch reads QRKCGFCKSNRDKECGQLLISENQKVAAHHKCMLFSSAL. The extended PHD1 domain (ePHD1) stretch occupies residues 14–132; sequence QRKCGFCKSN…IYMVYCRKHK (119 aa). A PHD-type 1 zinc finger spans residues 80 to 132; it reads LMCSLCHCPGATIGCDVKTCHRTYHYHCALHDKAQIREKPSQGIYMVYCRKHK. Residues S138, S145, and S155 each carry the phosphoserine modification. The interval 139–211 is disordered; it reads EADLEESFNE…RSSPNDTRPK (73 aa). A Nucleolar localization signal motif is present at residues 157–169; that stretch reads KTKKKSRKGRPRK. Basic residues predominate over residues 157–171; sequence KTKKKSRKGRPRKTN. Residue K173 forms a Glycyl lysine isopeptide (Lys-Gly) (interchain with G-Cter in SUMO2) linkage. S183 and S199 each carry phosphoserine. The segment at 209–249 adopts a C2HC pre-PHD-type 2 zinc-finger fold; that stretch reads RPKCGFCHVGEEENEARGKLHIFNAKKAAAHYKCMLFSSGT. Positions 209–330 are extended PHD2 domain (ePHD2); sequence RPKCGFCHVG…IYKLYCKNHS (122 aa). K227 is covalently cross-linked (Glycyl lysine isopeptide (Lys-Gly) (interchain with G-Cter in SUMO2)). A PHD-type 2 zinc finger spans residues 278-330; the sequence is MKCTLCSQPGATIGCEIKACVKTYHYHCGVQDKAKYIENMSRGIYKLYCKNHS. The tract at residues 330–364 is disordered; that stretch reads SGNDERDEEDEERESKSRGRVAIDQQLTQQQLNGN. Polar residues predominate over residues 354-364; the sequence is QQLTQQQLNGN. Position 357 is a phosphothreonine (T357).

Interacts with UBTF. Interacts with the NuRD complex component RBBP4 (via the nucleolar localization motif), the interaction mediates transcriptional repression activity. As to expression, at 12.5 dpc it is highly expressed in the embryonic central nervous system and at lower levels in other tissues. Very low levels present throughout the adult brain.

The protein resides in the nucleus. Its subcellular location is the nucleolus. It localises to the chromosome. The protein localises to the centromere. It is found in the kinetochore. Functionally, transcriptional regulator that associates with ribosomal RNA promoters and suppresses ribosomal RNA (rRNA) transcription. In Mus musculus (Mouse), this protein is PHD finger protein 6 (Phf6).